The primary structure comprises 258 residues: Type III pantothenate kinase (258 aa).

Residue 6-13 (DIGNTNTV) participates in ATP binding. Substrate is bound by residues Tyr100 and 107 to 110 (GADR). Asp109 (proton acceptor) is an active-site residue. Residue Asp129 participates in K(+) binding. ATP is bound at residue Thr132. Thr185 serves as a coordination point for substrate.

Belongs to the type III pantothenate kinase family. In terms of assembly, homodimer. NH4(+) is required as a cofactor. Requires K(+) as cofactor.

It localises to the cytoplasm. It carries out the reaction (R)-pantothenate + ATP = (R)-4'-phosphopantothenate + ADP + H(+). It functions in the pathway cofactor biosynthesis; coenzyme A biosynthesis; CoA from (R)-pantothenate: step 1/5. In terms of biological role, catalyzes the phosphorylation of pantothenate (Pan), the first step in CoA biosynthesis. This chain is Type III pantothenate kinase, found in Syntrophobacter fumaroxidans (strain DSM 10017 / MPOB).